A 472-amino-acid chain; its full sequence is F420-non-reducing hydrogenase subunit A (472 aa).

Residues C61, C64, C442, and C445 each coordinate Ni(2+).

The protein belongs to the [NiFe]/[NiFeSe] hydrogenase large subunit family. The F420-non-reducing hydrogenase is composed of three subunits; MvhA, MvhD and MvhG. It forms a complex with the heterodisulfide reductase (hdr). Ni(2+) serves as cofactor.

In terms of biological role, part of a complex that provides reducing equivalents for heterodisulfide reductase. This chain is F420-non-reducing hydrogenase subunit A (mvhA), found in Methanothermobacter marburgensis (strain ATCC BAA-927 / DSM 2133 / JCM 14651 / NBRC 100331 / OCM 82 / Marburg) (Methanobacterium thermoautotrophicum).